Consider the following 293-residue polypeptide: Probable porphobilinogen deaminase (293 aa).

Residue Cys-233 is modified to S-(dipyrrolylmethanemethyl)cysteine.

The protein belongs to the HMBS family. Dipyrromethane is required as a cofactor.

The catalysed reaction is 4 porphobilinogen + H2O = hydroxymethylbilane + 4 NH4(+). Its pathway is porphyrin-containing compound metabolism; protoporphyrin-IX biosynthesis; coproporphyrinogen-III from 5-aminolevulinate: step 2/4. In terms of biological role, tetrapolymerization of the monopyrrole PBG into the hydroxymethylbilane pre-uroporphyrinogen in several discrete steps. In Saccharolobus islandicus (strain M.16.27) (Sulfolobus islandicus), this protein is Probable porphobilinogen deaminase.